Consider the following 224-residue polypeptide: Claudin-19 (224 aa).

At Met-1–Gln-7 the chain is on the cytoplasmic side. A helical membrane pass occupies residues Leu-8–Pro-28. Over Gln-29–Arg-81 the chain is Extracellular. Cys-54 and Cys-64 form a disulfide bridge. A helical transmembrane segment spans residues Ala-82 to Met-102. At Lys-103–Arg-117 the chain is on the cytoplasmic side. A helical transmembrane segment spans residues Val-118–Ser-138. Over Trp-139–Glu-160 the chain is Extracellular. Residues Phe-161–Phe-181 traverse the membrane as a helical segment. Residues Leu-182–Val-224 lie on the Cytoplasmic side of the membrane. The disordered stretch occupies residues Arg-191–Val-224.

The protein belongs to the claudin family. As to quaternary structure, can form homo- and heteropolymeric tight junction strands. Interacts with other claudins including CLDN3, CLDN10, CLDN16 and CLDN18 with highest affinity for CLDN16. Interacts (via PDZ-binding motif TRV) with TJP1 (via PDZ domain).

The protein resides in the cell junction. The protein localises to the tight junction. Its subcellular location is the cell membrane. It carries out the reaction Mg(2+)(in) = Mg(2+)(out). The catalysed reaction is Ca(2+)(in) = Ca(2+)(out). The enzyme catalyses Na(+)(in) = Na(+)(out). It catalyses the reaction K(+)(in) = K(+)(out). It carries out the reaction Rb(+)(in) = Rb(+)(out). The catalysed reaction is Cs(+)(in) = Cs(+)(out). The enzyme catalyses Li(+)(in) = Li(+)(out). Forms paracellular channels: coassembles with CLDN16 into tight junction strands with cation-selective channels through the strands, conveying epithelial permeability in a process known as paracellular tight junction permeability. Involved in the maintenance of ion gradients along the nephron. In the thick ascending limb (TAL) of Henle's loop, facilitates sodium paracellular permeability from the interstitial compartment to the lumen, contributing to the lumen-positive transepithelial potential that drives paracellular magnesium and calcium reabsorption. Forms paracellular barriers on its own. In the peripheral nervous system, represents a major constituent of the tight junctions in Schwann cells and contributes to electrical sealing. During retinal neurogenesis, may regulate the barrier properties of tight junctions in retinal pigment epithelium, required for proper retinal tissue differentiation and vision. The sequence is that of Claudin-19 from Homo sapiens (Human).